The following is a 299-amino-acid chain: Cysteine synthase B (299 aa).

K40 is modified (N6-(pyridoxal phosphate)lysine). Residues N70, 174–178, and S261 each bind pyridoxal 5'-phosphate; that span reads GTGGT.

The protein belongs to the cysteine synthase/cystathionine beta-synthase family. It depends on pyridoxal 5'-phosphate as a cofactor.

The enzyme catalyses O-acetyl-L-serine + hydrogen sulfide = L-cysteine + acetate. The protein operates within amino-acid biosynthesis; L-cysteine biosynthesis; L-cysteine from L-serine: step 2/2. The protein is Cysteine synthase B (cysM) of Campylobacter jejuni subsp. jejuni serotype O:2 (strain ATCC 700819 / NCTC 11168).